The primary structure comprises 218 residues: Pyridoxine/pyridoxamine 5'-phosphate oxidase (218 aa).

Residues 14 to 17 (RREY) and K72 contribute to the substrate site. FMN is bound by residues 67–72 (RIVLLK), 82–83 (YT), R88, K89, and Q111. The substrate site is built by Y129, R133, and S137. FMN contacts are provided by residues 146 to 147 (QS) and W191. 197 to 199 (RLH) is a binding site for substrate. Residue R201 participates in FMN binding.

It belongs to the pyridoxamine 5'-phosphate oxidase family. As to quaternary structure, homodimer. The cofactor is FMN.

It catalyses the reaction pyridoxamine 5'-phosphate + O2 + H2O = pyridoxal 5'-phosphate + H2O2 + NH4(+). It carries out the reaction pyridoxine 5'-phosphate + O2 = pyridoxal 5'-phosphate + H2O2. It participates in cofactor metabolism; pyridoxal 5'-phosphate salvage; pyridoxal 5'-phosphate from pyridoxamine 5'-phosphate: step 1/1. The protein operates within cofactor metabolism; pyridoxal 5'-phosphate salvage; pyridoxal 5'-phosphate from pyridoxine 5'-phosphate: step 1/1. In terms of biological role, catalyzes the oxidation of either pyridoxine 5'-phosphate (PNP) or pyridoxamine 5'-phosphate (PMP) into pyridoxal 5'-phosphate (PLP). This Escherichia coli (strain SMS-3-5 / SECEC) protein is Pyridoxine/pyridoxamine 5'-phosphate oxidase.